An 868-amino-acid polypeptide reads, in one-letter code: Transcription factor pynR (868 aa).

The segment at residues 11-37 is a DNA-binding region (zn(2)-C6 fungal-type); sequence CTFCRTRKIACSGERICNACRSRSIEC. 4 disordered regions span residues 51–88, 662–683, 715–761, and 829–868; these read NKTT…TSAV, LSGS…LDLS, SGIP…ASDL, and GMGE…GMSN. Composition is skewed to low complexity over residues 663-683 and 715-727; these read SGSR…LDLS and SGIP…SISH.

The protein localises to the nucleus. Its function is as follows. Transcription factor that regulates the expression of the gene cluster that mediates the biosynthesis of pyranonigrins, a family of antioxidative compounds. This chain is Transcription factor pynR, found in Aspergillus niger (strain ATCC MYA-4892 / CBS 513.88 / FGSC A1513).